The sequence spans 383 residues: 3-phytase (383 aa).

The first 26 residues, 1 to 26 (MNHSKTLLLTAAAGLMLTCGAVSSQA), serve as a signal peptide directing secretion. A propeptide spanning residues 27-30 (KHKL) is cleaved from the precursor. Positions 31 to 362 (SDPYHFTVNA…VPWERIADKI (332 aa)) constitute a BPP domain. Positions 364-383 (FHPQVNKQVDPRKMTDRSGK) are disordered. The segment covering 372–383 (VDPRKMTDRSGK) has biased composition (basic and acidic residues).

The protein resides in the secreted. The catalysed reaction is 1D-myo-inositol hexakisphosphate + H2O = 1D-myo-inositol 1,2,4,5,6-pentakisphosphate + phosphate. This is 3-phytase (phy) from Bacillus sp. (strain DS11).